A 133-amino-acid polypeptide reads, in one-letter code: Small ribosomal subunit protein uS11 (133 aa).

This sequence belongs to the universal ribosomal protein uS11 family. Part of the 30S ribosomal subunit. Interacts with proteins S7 and S18. Binds to IF-3.

In terms of biological role, located on the platform of the 30S subunit, it bridges several disparate RNA helices of the 16S rRNA. Forms part of the Shine-Dalgarno cleft in the 70S ribosome. This chain is Small ribosomal subunit protein uS11, found in Bordetella avium (strain 197N).